Reading from the N-terminus, the 226-residue chain is Ribonuclease T (226 aa).

Positions 20–194 (VVIDVETAGF…YDTERTAELF (175 aa)) constitute an Exonuclease domain. 4 residues coordinate Mg(2+): Asp-23, Glu-25, His-181, and Asp-186. His-181 acts as the Proton donor/acceptor in catalysis.

Belongs to the RNase T family. In terms of assembly, homodimer. Mg(2+) serves as cofactor.

In terms of biological role, trims short 3' overhangs of a variety of RNA species, leaving a one or two nucleotide 3' overhang. Responsible for the end-turnover of tRNA: specifically removes the terminal AMP residue from uncharged tRNA (tRNA-C-C-A). Also appears to be involved in tRNA biosynthesis. This chain is Ribonuclease T, found in Shewanella denitrificans (strain OS217 / ATCC BAA-1090 / DSM 15013).